Consider the following 302-residue polypeptide: Protoheme IX farnesyltransferase (302 aa).

9 consecutive transmembrane segments (helical) span residues 27-47 (VVAL…PGMV), 53-73 (LFGL…NHVI), 100-120 (LVFA…AVNV), 121-141 (LTAV…TVFL), 149-169 (IVWG…AVTG), 175-195 (PLLL…ALAI), 215-235 (VAFT…VSLV), 237-257 (FIIH…GIGF), and 273-293 (AMPT…LLLV).

This sequence belongs to the UbiA prenyltransferase family. Protoheme IX farnesyltransferase subfamily.

The protein localises to the cell inner membrane. The enzyme catalyses heme b + (2E,6E)-farnesyl diphosphate + H2O = Fe(II)-heme o + diphosphate. Its pathway is porphyrin-containing compound metabolism; heme O biosynthesis; heme O from protoheme: step 1/1. Converts heme B (protoheme IX) to heme O by substitution of the vinyl group on carbon 2 of heme B porphyrin ring with a hydroxyethyl farnesyl side group. The protein is Protoheme IX farnesyltransferase of Thioalkalivibrio sulfidiphilus (strain HL-EbGR7).